We begin with the raw amino-acid sequence, 290 residues long: 4-diphosphocytidyl-2-C-methyl-D-erythritol kinase (290 aa).

Lysine 13 is an active-site residue. 96-106 (PMGGGIGGGSS) is a binding site for ATP. Aspartate 138 is a catalytic residue.

It belongs to the GHMP kinase family. IspE subfamily.

The enzyme catalyses 4-CDP-2-C-methyl-D-erythritol + ATP = 4-CDP-2-C-methyl-D-erythritol 2-phosphate + ADP + H(+). Its pathway is isoprenoid biosynthesis; isopentenyl diphosphate biosynthesis via DXP pathway; isopentenyl diphosphate from 1-deoxy-D-xylulose 5-phosphate: step 3/6. Its function is as follows. Catalyzes the phosphorylation of the position 2 hydroxy group of 4-diphosphocytidyl-2C-methyl-D-erythritol. The chain is 4-diphosphocytidyl-2-C-methyl-D-erythritol kinase from Vibrio vulnificus (strain CMCP6).